Reading from the N-terminus, the 627-residue chain is Translation factor GUF1, mitochondrial (627 aa).

The N-terminal 16 residues, 1–16 (MSLAWSAGRAWSRQSY), are a transit peptide targeting the mitochondrion. The tr-type G domain occupies 40-221 (ERYRNFCIVA…AVIERIPHPV (182 aa)). GTP contacts are provided by residues 49–56 (AHIDHGKS), 114–118 (DTPGH), and 168–171 (NKID).

The protein belongs to the TRAFAC class translation factor GTPase superfamily. Classic translation factor GTPase family. LepA subfamily.

The protein resides in the mitochondrion inner membrane. It catalyses the reaction GTP + H2O = GDP + phosphate + H(+). Functionally, promotes mitochondrial protein synthesis. May act as a fidelity factor of the translation reaction, by catalyzing a one-codon backward translocation of tRNAs on improperly translocated ribosomes. Binds to mitochondrial ribosomes in a GTP-dependent manner. The sequence is that of Translation factor GUF1, mitochondrial from Fusarium vanettenii (strain ATCC MYA-4622 / CBS 123669 / FGSC 9596 / NRRL 45880 / 77-13-4) (Fusarium solani subsp. pisi).